Consider the following 525-residue polypeptide: CTP synthase (525 aa).

The tract at residues 1 to 269 is amidoligase domain; that stretch reads MKYIIVTGGV…ADAITTHLHL (269 aa). CTP is bound at residue S12. S12 is a UTP binding site. ATP is bound by residues 13 to 18 and D70; that span reads GLGKGI. The Mg(2+) site is built by D70 and E144. CTP contacts are provided by residues 151–153, 190–195, and K226; these read DIE and KTKPTQ. UTP-binding positions include 190–195 and K226; that span reads KTKPTQ. Positions 292–524 constitute a Glutamine amidotransferase type-1 domain; that stretch reads VAIVSKYGIE…VSACRKNKKT (233 aa). Position 348 (G348) interacts with L-glutamine. C375 functions as the Nucleophile; for glutamine hydrolysis in the catalytic mechanism. Residues 376–379, E399, and R454 contribute to the L-glutamine site; that span reads LGFQ. Active-site residues include H497 and E499.

Belongs to the CTP synthase family. Homotetramer.

It catalyses the reaction UTP + L-glutamine + ATP + H2O = CTP + L-glutamate + ADP + phosphate + 2 H(+). It carries out the reaction L-glutamine + H2O = L-glutamate + NH4(+). The catalysed reaction is UTP + NH4(+) + ATP = CTP + ADP + phosphate + 2 H(+). It functions in the pathway pyrimidine metabolism; CTP biosynthesis via de novo pathway; CTP from UDP: step 2/2. Allosterically activated by GTP, when glutamine is the substrate; GTP has no effect on the reaction when ammonia is the substrate. The allosteric effector GTP functions by stabilizing the protein conformation that binds the tetrahedral intermediate(s) formed during glutamine hydrolysis. Inhibited by the product CTP, via allosteric rather than competitive inhibition. Its function is as follows. Catalyzes the ATP-dependent amination of UTP to CTP with either L-glutamine or ammonia as the source of nitrogen. Regulates intracellular CTP levels through interactions with the four ribonucleotide triphosphates. In Methanosphaerula palustris (strain ATCC BAA-1556 / DSM 19958 / E1-9c), this protein is CTP synthase.